The following is a 188-amino-acid chain: UPF0301 protein PsycPRwf_0144 (188 aa).

Belongs to the UPF0301 (AlgH) family.

The chain is UPF0301 protein PsycPRwf_0144 from Psychrobacter sp. (strain PRwf-1).